The following is a 249-amino-acid chain: UDP-N-acetyl-D-mannosaminuronic acid transferase (249 aa).

The protein belongs to the glycosyltransferase 26 family.

It carries out the reaction UDP-N-acetyl-alpha-D-mannosaminouronate + N-acetyl-alpha-D-glucosaminyl-di-trans,octa-cis-undecaprenyl diphosphate = beta-D-ManNAcA-(1-&gt;4)-alpha-D-GlcNAc-di-trans,octa-cis-undecaprenyl diphosphate + UDP + H(+). It participates in bacterial outer membrane biogenesis; enterobacterial common antigen biosynthesis. Catalyzes the synthesis of Und-PP-GlcNAc-ManNAcA (Lipid II), the second lipid-linked intermediate involved in enterobacterial common antigen (ECA) synthesis. This is UDP-N-acetyl-D-mannosaminuronic acid transferase from Pectobacterium carotovorum subsp. carotovorum (strain PC1).